The primary structure comprises 281 residues: NADPH-dependent 7-cyano-7-deazaguanine reductase (281 aa).

87–89 (VES) serves as a coordination point for substrate. 89–90 (SK) contacts NADPH. Cysteine 188 serves as the catalytic Thioimide intermediate. The active-site Proton donor is aspartate 195. Position 227–228 (227–228 (HE)) interacts with substrate. Residue 256-257 (RG) coordinates NADPH.

It belongs to the GTP cyclohydrolase I family. QueF type 2 subfamily. Homodimer.

It is found in the cytoplasm. It carries out the reaction 7-aminomethyl-7-carbaguanine + 2 NADP(+) = 7-cyano-7-deazaguanine + 2 NADPH + 3 H(+). It functions in the pathway tRNA modification; tRNA-queuosine biosynthesis. Catalyzes the NADPH-dependent reduction of 7-cyano-7-deazaguanine (preQ0) to 7-aminomethyl-7-deazaguanine (preQ1). The protein is NADPH-dependent 7-cyano-7-deazaguanine reductase of Aliivibrio fischeri (strain ATCC 700601 / ES114) (Vibrio fischeri).